Consider the following 89-residue polypeptide: Small ribosomal subunit protein uS15 (89 aa).

It belongs to the universal ribosomal protein uS15 family. Part of the 30S ribosomal subunit. Forms a bridge to the 50S subunit in the 70S ribosome, contacting the 23S rRNA.

One of the primary rRNA binding proteins, it binds directly to 16S rRNA where it helps nucleate assembly of the platform of the 30S subunit by binding and bridging several RNA helices of the 16S rRNA. Its function is as follows. Forms an intersubunit bridge (bridge B4) with the 23S rRNA of the 50S subunit in the ribosome. This chain is Small ribosomal subunit protein uS15, found in Methylococcus capsulatus (strain ATCC 33009 / NCIMB 11132 / Bath).